The sequence spans 133 residues: Small ribosomal subunit protein uS8 (133 aa).

Belongs to the universal ribosomal protein uS8 family. Part of the 30S ribosomal subunit. Contacts proteins S5 and S12.

In terms of biological role, one of the primary rRNA binding proteins, it binds directly to 16S rRNA central domain where it helps coordinate assembly of the platform of the 30S subunit. This is Small ribosomal subunit protein uS8 from Crocosphaera subtropica (strain ATCC 51142 / BH68) (Cyanothece sp. (strain ATCC 51142)).